Consider the following 221-residue polypeptide: Octanoyltransferase (221 aa).

The region spanning 14 to 202 is the BPL/LPL catalytic domain; sequence GVRPDTLWFL…MLGARNAPHP (189 aa). Residues 54–61, 128–130, and 141–143 contribute to the substrate site; these read RGGLLTYH, SIG, and GFA. Catalysis depends on Cys159, which acts as the Acyl-thioester intermediate. The segment at 197 to 221 is disordered; that stretch reads RNAPHPPAPNLSSGDLGTGTRAGRT.

This sequence belongs to the LipB family.

It localises to the cytoplasm. It catalyses the reaction octanoyl-[ACP] + L-lysyl-[protein] = N(6)-octanoyl-L-lysyl-[protein] + holo-[ACP] + H(+). Its pathway is protein modification; protein lipoylation via endogenous pathway; protein N(6)-(lipoyl)lysine from octanoyl-[acyl-carrier-protein]: step 1/2. Its function is as follows. Catalyzes the transfer of endogenously produced octanoic acid from octanoyl-acyl-carrier-protein onto the lipoyl domains of lipoate-dependent enzymes. Lipoyl-ACP can also act as a substrate although octanoyl-ACP is likely to be the physiological substrate. This chain is Octanoyltransferase, found in Frankia casuarinae (strain DSM 45818 / CECT 9043 / HFP020203 / CcI3).